The primary structure comprises 300 residues: Acetylglutamate kinase (300 aa).

Residues 68–69, Arg-90, and Asn-195 contribute to the substrate site; that span reads GG.

This sequence belongs to the acetylglutamate kinase family. ArgB subfamily.

It is found in the cytoplasm. The catalysed reaction is N-acetyl-L-glutamate + ATP = N-acetyl-L-glutamyl 5-phosphate + ADP. The protein operates within amino-acid biosynthesis; L-arginine biosynthesis; N(2)-acetyl-L-ornithine from L-glutamate: step 2/4. In terms of biological role, catalyzes the ATP-dependent phosphorylation of N-acetyl-L-glutamate. The sequence is that of Acetylglutamate kinase from Halorhodospira halophila (strain DSM 244 / SL1) (Ectothiorhodospira halophila (strain DSM 244 / SL1)).